The following is a 180-amino-acid chain: 3-hydroxyanthranilate 3,4-dioxygenase (180 aa).

Residue Arg-46 participates in O2 binding. The Fe cation site is built by His-50, Glu-56, and His-94. Residue Glu-56 participates in substrate binding. Residues Arg-98 and Glu-109 each coordinate substrate. Residues Cys-124, Cys-127, Cys-161, and Cys-164 each contribute to the Fe cation site.

Belongs to the 3-HAO family. In terms of assembly, homodimer. Requires Fe(2+) as cofactor.

The enzyme catalyses 3-hydroxyanthranilate + O2 = (2Z,4Z)-2-amino-3-carboxymuconate 6-semialdehyde. The protein operates within cofactor biosynthesis; NAD(+) biosynthesis; quinolinate from L-kynurenine: step 3/3. Functionally, catalyzes the oxidative ring opening of 3-hydroxyanthranilate to 2-amino-3-carboxymuconate semialdehyde, which spontaneously cyclizes to quinolinate. The chain is 3-hydroxyanthranilate 3,4-dioxygenase from Ruegeria pomeroyi (strain ATCC 700808 / DSM 15171 / DSS-3) (Silicibacter pomeroyi).